A 995-amino-acid chain; its full sequence is MFIHRMKSNLASLFLSFFLLLACEFTFSYADFSTTTSDATHPSATATEDIFSTPAVPSLGLAQNPSVYEPYRGDKCGGYNAIQVSEYEKGVLAILQLNGDPCYAYGTDYPFLALNVSFDSIDRLHVSIQDLYGAQFQFSKRTDVWDAPLYHFQPQFGDRTYNFSFNSQPFEFWVTRVSDGEVLFDTRGHKLIFEDQYIELTTNMVDDYNVYGLAETVHGLRLGNNLTRTFWANGNPTPLDRNAYGTHPFYLEHRYTPSENLNSDGQPSYTSSTHGVLMLTANGMEVLLRPNYLQYRIIGGIVDLYIYVGGTKNPKDTVSQFVQSVGTPAMQQHWTFGFHICRWGYKNVFDLVEVKENFKNFEIPVDTFWSDIDYMYEYRDFTVESNAFPKDKMMEFFNSLQQSNQHYVPIIDAAIYAANPINRSDDVYYPYYEGVRRDIFLRNPDRSLYVGNVWPGFTTFPDFTNPETTNYWTECLMNLSAAFGYNSSFPLPYSGLWIDMNEPTSFCIGSCGTDKLDQNPVHPAFILEGEPNNMVYMYPEGFEHTNASEHASAYQASVSQYYATATSTVESVKATSTPLNVRPKYNINYPPYALNTEQGEGDLSNLGVSVNATYHDGTVRYNLFNTYGYDQSRVTYDSLTSIEPNVRPFILSRSTFVGSGKYAAHWLGDNYSLWSNMIFSIPGALTFNMVGLPMVGADVCGFMGNTDEELCSRWMALGAFLPFYRNHNSLGSISQEPYRWESVAESSRCAMNIRYSLLPYWYTLMYEASSQGLPLIRPLFFEFPNEPSLANADRQFMVGSALLVTPVLEPNVDYVRGVFPGDNSTIWYDWYDHKVIYRQHNENITLSAPLTHINVAIRGGNIIPMQKPSLTTHETKQNPYDLLVALDSDRKACGSLYVDDGVSIQQESTLFVKFVANGDSLSIESYGDLQVHEPLSKITIIGLPCAPIGVYFEGVQVESFSYLEDTKELVLTNLEAFTSTGAFSNNWTISWNLPV.

The N-terminal stretch at 1-30 is a signal peptide; the sequence is MFIHRMKSNLASLFLSFFLLLACEFTFSYA. Asparagine 115, asparagine 162, asparagine 225, asparagine 422, asparagine 478, and asparagine 486 each carry an N-linked (GlcNAc...) asparagine glycan. Glutamate 502 is a catalytic residue. 2 N-linked (GlcNAc...) asparagine glycosylation sites follow: asparagine 546 and asparagine 611. The active-site Proton donor is the aspartate 669. 4 N-linked (GlcNAc...) asparagine glycosylation sites follow: asparagine 670, asparagine 823, asparagine 843, and asparagine 986.

Belongs to the glycosyl hydrolase 31 family.

It is found in the spore wall. This is an uncharacterized protein from Schizosaccharomyces pombe (strain 972 / ATCC 24843) (Fission yeast).